A 335-amino-acid polypeptide reads, in one-letter code: 5-dehydro-2-deoxygluconokinase (335 aa).

This sequence belongs to the carbohydrate kinase PfkB family.

It catalyses the reaction 5-dehydro-2-deoxy-D-gluconate + ATP = 6-phospho-5-dehydro-2-deoxy-D-gluconate + ADP + H(+). Its pathway is polyol metabolism; myo-inositol degradation into acetyl-CoA; acetyl-CoA from myo-inositol: step 5/7. Catalyzes the phosphorylation of 5-dehydro-2-deoxy-D-gluconate (2-deoxy-5-keto-D-gluconate or DKG) to 6-phospho-5-dehydro-2-deoxy-D-gluconate (DKGP). In Geobacillus kaustophilus (strain HTA426), this protein is 5-dehydro-2-deoxygluconokinase.